A 170-amino-acid chain; its full sequence is Peptide deformylase (170 aa).

Cys91 and His133 together coordinate Fe cation. The active site involves Glu134. Position 137 (His137) interacts with Fe cation.

The protein belongs to the polypeptide deformylase family. It depends on Fe(2+) as a cofactor.

It catalyses the reaction N-terminal N-formyl-L-methionyl-[peptide] + H2O = N-terminal L-methionyl-[peptide] + formate. Removes the formyl group from the N-terminal Met of newly synthesized proteins. Requires at least a dipeptide for an efficient rate of reaction. N-terminal L-methionine is a prerequisite for activity but the enzyme has broad specificity at other positions. The polypeptide is Peptide deformylase (Actinobacillus pleuropneumoniae serotype 7 (strain AP76)).